The primary structure comprises 261 residues: Uridine-cytidine kinase 2 (261 aa).

A disordered region spans residues 1 to 24 (MAGDSEQALPKHSPQNGQPFLIGV). An ATP-binding site is contributed by 26–34 (GGTASGKSS). The substrate site is built by Asp-83, Tyr-111, His-116, Arg-165, Arg-175, and Gln-183. Asp-212 lines the ATP pocket. A compositionally biased stretch (polar residues) spans 238–247 (NGYTNGFTSP). Residues 238–261 (NGYTNGFTSPRTRHPSDSNSSRPH) are disordered.

Belongs to the uridine kinase family. Homotetramer.

The enzyme catalyses uridine + ATP = UMP + ADP + H(+). It catalyses the reaction cytidine + ATP = CMP + ADP + H(+). The protein operates within pyrimidine metabolism; CTP biosynthesis via salvage pathway; CTP from cytidine: step 1/3. It participates in pyrimidine metabolism; UMP biosynthesis via salvage pathway; UMP from uridine: step 1/1. Phosphorylates uridine and cytidine to uridine monophosphate and cytidine monophosphate. Does not phosphorylate deoxyribonucleosides or purine ribonucleosides. Can use ATP or GTP as a phosphate donor. The sequence is that of Uridine-cytidine kinase 2 (uck2) from Xenopus tropicalis (Western clawed frog).